The sequence spans 516 residues: Glycosyl hydrolase family 109 protein 4 (516 aa).

An N-terminal signal peptide occupies residues 1-18; it reads MKKIKLLLVAGACVVLSA. A lipid anchor (N-palmitoyl cysteine) is attached at cysteine 19. Cysteine 19 is lipidated: S-diacylglycerol cysteine. NAD(+)-binding positions include 76–77, aspartate 98, 146–149, 166–167, and asparagine 195; these read MR, WLHH, and EV. Residues tyrosine 224, arginine 247, 259 to 262, and tyrosine 337 contribute to the substrate site; that span reads YATH. Tyrosine 259 provides a ligand contact to NAD(+).

The protein belongs to the Gfo/Idh/MocA family. Glycosyl hydrolase 109 subfamily. NAD(+) serves as cofactor.

It is found in the cell membrane. In terms of biological role, glycosidase. The polypeptide is Glycosyl hydrolase family 109 protein 4 (Phocaeicola vulgatus (strain ATCC 8482 / DSM 1447 / JCM 5826 / CCUG 4940 / NBRC 14291 / NCTC 11154) (Bacteroides vulgatus)).